The chain runs to 217 residues: MNQTLLSSFGTAFERVEHALDALREGRGVMVLDDEDRENEGDMIFAAETMTVEQMALTIRHGSGIVCLCLTEERRKQLDLPMMVENNTSAYGTGFTVTIEAAEGVTTGVSAADRVTTVRAAIADGAKPSDLNRPGHVFPLRAQPGGVLTRGGHTEATIDLVTLAGFKPAGVLCELTNDDGTMARAPECIKFAQQHNMAVVTIEDLVAYRREHERKAS.

Residues 37-38, Asp42, 150-154, and Glu174 contribute to the D-ribulose 5-phosphate site; these read RE and RGGHT. Residue Glu38 coordinates Mg(2+). Residue His153 coordinates Mg(2+).

It belongs to the DHBP synthase family. As to quaternary structure, homodimer. Requires Mg(2+) as cofactor. The cofactor is Mn(2+).

The catalysed reaction is D-ribulose 5-phosphate = (2S)-2-hydroxy-3-oxobutyl phosphate + formate + H(+). It participates in cofactor biosynthesis; riboflavin biosynthesis; 2-hydroxy-3-oxobutyl phosphate from D-ribulose 5-phosphate: step 1/1. Catalyzes the conversion of D-ribulose 5-phosphate to formate and 3,4-dihydroxy-2-butanone 4-phosphate. The chain is 3,4-dihydroxy-2-butanone 4-phosphate synthase from Klebsiella pneumoniae subsp. pneumoniae (strain ATCC 700721 / MGH 78578).